The primary structure comprises 548 residues: ComP-specific O-oligosaccharyltransferase (548 aa).

Helical transmembrane passes span 8–28 (IKNY…IIPN), 32–52 (LSST…LLTV), 68–88 (WFLF…IYFF), 91–111 (FFFS…GFNE), 119–139 (IVKK…LIAI), 164–184 (LGQP…LCYL), 189–209 (SLNN…NVMT), 213–233 (SAWI…QKKI), 239–259 (IFFN…FNLI), 331–351 (MLWN…CFLI), 363–383 (LFLF…YPFA), and 418–438 (TLFL…VLDI).

This sequence belongs to the PglL O-oligosaccharyltransferase family.

It localises to the cell membrane. Its function is as follows. Specifically catalyzes the glycosylation of the pilin-like competence factor ComP. The polypeptide is ComP-specific O-oligosaccharyltransferase (Acinetobacter baylyi (strain ATCC 33305 / BD413 / ADP1)).